We begin with the raw amino-acid sequence, 328 residues long: Phosphate acyltransferase (328 aa).

It belongs to the PlsX family. As to quaternary structure, homodimer. Probably interacts with PlsY.

It localises to the cytoplasm. It carries out the reaction a fatty acyl-[ACP] + phosphate = an acyl phosphate + holo-[ACP]. Its pathway is lipid metabolism; phospholipid metabolism. Functionally, catalyzes the reversible formation of acyl-phosphate (acyl-PO(4)) from acyl-[acyl-carrier-protein] (acyl-ACP). This enzyme utilizes acyl-ACP as fatty acyl donor, but not acyl-CoA. The protein is Phosphate acyltransferase of Staphylococcus saprophyticus subsp. saprophyticus (strain ATCC 15305 / DSM 20229 / NCIMB 8711 / NCTC 7292 / S-41).